Here is an 875-residue protein sequence, read N- to C-terminus: DNA mismatch repair protein MutS (875 aa).

626–633 (GPNMAGKS) lines the ATP pocket. Positions 830 to 855 (RAAPPPPAPAAPKTSPVEERLREIQP) are disordered. Positions 845–855 (PVEERLREIQP) are enriched in basic and acidic residues.

This sequence belongs to the DNA mismatch repair MutS family.

Its function is as follows. This protein is involved in the repair of mismatches in DNA. It is possible that it carries out the mismatch recognition step. This protein has a weak ATPase activity. In Cereibacter sphaeroides (strain ATCC 17023 / DSM 158 / JCM 6121 / CCUG 31486 / LMG 2827 / NBRC 12203 / NCIMB 8253 / ATH 2.4.1.) (Rhodobacter sphaeroides), this protein is DNA mismatch repair protein MutS.